The following is a 1138-amino-acid chain: Transmembrane channel-like protein 3 (1138 aa).

Residues 1 to 15 (MEAAPGTAAAAAKPA) show a composition bias toward low complexity. Disordered regions lie at residues 1-20 (MEAAPGTAAAAAKPAKSCKK) and 29-54 (NIYTYQEPPHSNSDEDISEEKADSQD). Residues 1–155 (MEAAPGTAAA…VASYFIFLRW (155 aa)) are Cytoplasmic-facing. A helical membrane pass occupies residues 156–176 (LFGINIVLTIMTGAFVVLPEL). Topologically, residues 177–202 (LAGAPFGSTVSKTIRQEDLKTAQDLD) are extracellular. A helical membrane pass occupies residues 203-223 (TIWSLGGYLQYSVLFYGYYGS). Residues 224–233 (DRKIGKAGYR) lie on the Cytoplasmic side of the membrane. The helical transmembrane segment at 234-254 (LPLAYFLVGMAVFAYSFIILL) threads the bilayer. At 255–327 (KKMAKNSRMS…KNLAVTISLR (73 aa)) the chain is on the extracellular side. Asn-272 carries an N-linked (GlcNAc...) asparagine glycan. The helical transmembrane segment at 328–348 (IIANILVLLSLTGSIYIIYFV) threads the bilayer. At 349-369 (VDRSQKLENNKRELTLWEKNE) the chain is on the cytoplasmic side. Residues 370–390 (VSVVVSLITMIAPSAFELVAA) form a helical membrane-spanning segment. Residues 391 to 401 (LEMYHPRTTLR) are Extracellular-facing. The helical transmembrane segment at 402 to 422 (FQLARVLVLYLGNLYSLIIAL) threads the bilayer. At 423-508 (LDKVNSMSVT…CWETYVGQEM (86 aa)) the chain is on the cytoplasmic side. Residues 509–529 (LKLSIIDMIFTVASILLIDFF) form a helical membrane-spanning segment. Residues 530–569 (RGLCVRYLSDCWCWDLESKFPEYGEFKIAENVLHLVYNQG) lie on the Extracellular side of the membrane. Residues 570–590 (MIWMGAFFSPCLPAFNVLKLI) traverse the membrane as a helical segment. Topologically, residues 591 to 618 (GLMYLRSWAVLTCNVPHQQVFRASRSNN) are cytoplasmic. The helical transmembrane segment at 619–639 (FYLAMLLFMLFLCMLPTIFAI) threads the bilayer. Residues 640 to 676 (ARYKPSLSCGPFSGQEKIYDIVSETIQNDFPAWFNSV) lie on the Extracellular side of the membrane. Residues 677 to 697 (IAYISSPVVVLPALLLLFMLI) traverse the membrane as a helical segment. Over 698-1138 (YYLQSIARSL…EPNELVCSNV (441 aa)) the chain is Cytoplasmic. The span at 753–763 (NSEGTRFQSLD) shows a compositional bias: polar residues. Disordered stretches follow at residues 753-859 (NSEG…RYPS), 973-1005 (SPHPSEDEEDEEALGRHYVKRSHRPRSLSDLRP), and 1065-1095 (PKTKHMLEQSLTESDSVSIESSSDPQNSSND). Basic and acidic residues predominate over residues 764–773 (GSDKRPDKDG). Composition is skewed to polar residues over residues 777 to 795 (SQESSVRASTPRKNGSVLN) and 804 to 813 (TRIQTISQTV). The segment covering 828 to 845 (TTPTTSASLTPAPSVSSA) has biased composition (low complexity). The segment covering 989–998 (HYVKRSHRPR) has biased composition (basic residues). Low complexity predominate over residues 1074–1095 (SLTESDSVSIESSSDPQNSSND).

Belongs to the TMC family. In terms of tissue distribution, expressed in a range of tissues including cerebrum, cerebellum, retina, cochlea, lung, liver and heart. Also expressed in the apical, medial and basal portions of the basillar papilla.

The protein localises to the membrane. In terms of biological role, probable component of an ion channel. This chain is Transmembrane channel-like protein 3, found in Gallus gallus (Chicken).